Reading from the N-terminus, the 116-residue chain is NADH-ubiquinone oxidoreductase chain 3 (116 aa).

Transmembrane regions (helical) follow at residues 3-23 (LITT…TISF), 56-76 (FFLI…LLPL), and 85-105 (PALT…GLIY).

It belongs to the complex I subunit 3 family.

Its subcellular location is the mitochondrion membrane. The enzyme catalyses a ubiquinone + NADH + 5 H(+)(in) = a ubiquinol + NAD(+) + 4 H(+)(out). Core subunit of the mitochondrial membrane respiratory chain NADH dehydrogenase (Complex I) that is believed to belong to the minimal assembly required for catalysis. Complex I functions in the transfer of electrons from NADH to the respiratory chain. The immediate electron acceptor for the enzyme is believed to be ubiquinone. This is NADH-ubiquinone oxidoreductase chain 3 (MT-ND3) from Salmo salar (Atlantic salmon).